The following is a 99-amino-acid chain: MRRALSLLARLPRLLLIGLVRLYQLVLSPHLGRTCRFHPTCSAYAIQAFREYGALKGLVLTVHRLLRCHPWGGHGYDPPRWFDEEHPAADGRPQAAEEQ.

Belongs to the UPF0161 family.

It localises to the cell inner membrane. In terms of biological role, could be involved in insertion of integral membrane proteins into the membrane. In Salinibacter ruber (strain DSM 13855 / M31), this protein is Putative membrane protein insertion efficiency factor.